A 415-amino-acid polypeptide reads, in one-letter code: Serine hydroxymethyltransferase 1 (415 aa).

Residues Leu-122 and 126 to 128 (GHL) each bind (6S)-5,6,7,8-tetrahydrofolate. An N6-(pyridoxal phosphate)lysine modification is found at Lys-230.

The protein belongs to the SHMT family. As to quaternary structure, homodimer. Pyridoxal 5'-phosphate serves as cofactor.

It localises to the cytoplasm. The enzyme catalyses (6R)-5,10-methylene-5,6,7,8-tetrahydrofolate + glycine + H2O = (6S)-5,6,7,8-tetrahydrofolate + L-serine. It functions in the pathway one-carbon metabolism; tetrahydrofolate interconversion. The protein operates within amino-acid biosynthesis; glycine biosynthesis; glycine from L-serine: step 1/1. Catalyzes the reversible interconversion of serine and glycine with tetrahydrofolate (THF) serving as the one-carbon carrier. This reaction serves as the major source of one-carbon groups required for the biosynthesis of purines, thymidylate, methionine, and other important biomolecules. Also exhibits THF-independent aldolase activity toward beta-hydroxyamino acids, producing glycine and aldehydes, via a retro-aldol mechanism. This chain is Serine hydroxymethyltransferase 1, found in Burkholderia thailandensis (strain ATCC 700388 / DSM 13276 / CCUG 48851 / CIP 106301 / E264).